We begin with the raw amino-acid sequence, 274 residues long: tRNA-cytidine(32) 2-sulfurtransferase (274 aa).

Residues 40-45 (SGGKDS) carry the PP-loop motif motif. [4Fe-4S] cluster contacts are provided by cysteine 115, cysteine 118, and cysteine 206.

The protein belongs to the TtcA family. As to quaternary structure, homodimer. The cofactor is Mg(2+). Requires [4Fe-4S] cluster as cofactor.

The protein localises to the cytoplasm. The enzyme catalyses cytidine(32) in tRNA + S-sulfanyl-L-cysteinyl-[cysteine desulfurase] + AH2 + ATP = 2-thiocytidine(32) in tRNA + L-cysteinyl-[cysteine desulfurase] + A + AMP + diphosphate + H(+). Its pathway is tRNA modification. Functionally, catalyzes the ATP-dependent 2-thiolation of cytidine in position 32 of tRNA, to form 2-thiocytidine (s(2)C32). The sulfur atoms are provided by the cysteine/cysteine desulfurase (IscS) system. This is tRNA-cytidine(32) 2-sulfurtransferase from Pseudomonas syringae pv. syringae (strain B728a).